We begin with the raw amino-acid sequence, 477 residues long: UDP-galactose-lipid carrier transferase (477 aa).

6 consecutive transmembrane segments (helical) span residues 16–36, 52–72, 93–113, 115–135, 175–195, and 284–304; these read SLAL…IVLI, LDLK…WFWV, TILI…WELS, WIWI…RACV, VIAF…GVPV, and FDLV…VILI. Over 305 to 477 the chain is Cytoplasmic; that stretch reads FMVSRDGGAP…GVVLKRDGAY (173 aa).

The protein belongs to the bacterial sugar transferase family.

The protein resides in the cell membrane. It participates in glycan metabolism; exopolysaccharide biosynthesis. Functionally, involved in the biosynthesis of amylovoran which functions as a virulence factor. May act as a sugar transferase and may be involved in the export of the repeating unit by flipping the lipid carrier to the periplasmic face of the inner membrane. The protein is UDP-galactose-lipid carrier transferase (amsG) of Erwinia amylovora (Fire blight bacteria).